The sequence spans 416 residues: MDVMRSVLGMVVLLTIAFLLSVNKKKISLRTVGAALVLQVVIGGIMLWLPPGRWVAEKVAFGVHKVMAYSDAGSAFIFGSLVGPKMDTLFDGAGFIFGFRVLPAIIFVTALVSILYYIGVMGILIRILGGIFQKALNISKIESFVAVTTIFLGQNEIPAIVKPFIDRLNRNELFTAICSGMASIAGSTMIGYAALGVPVEYLLAASLMAIPGGILFARLLSPATESSQVSFNNLSFTETPPKSIIEAAATGAMTGLKIAAGVATVVMAFVAIIALINGIIGGVGGWFGFEHASLESILGYLLAPLAWVMGVDWSDANLAGSLIGQKLAINEFVAYLNFSPYLQTAGTLDAKTVAIISFALCGFANFGSIGVVVGAFSAVAPHRAPEIAQLGLRALAAATLSNLMSATIAGFFIGLA.

Topologically, residues 1–2 (MD) are periplasmic. A helical transmembrane segment spans residues 3–23 (VMRSVLGMVVLLTIAFLLSVN). Over 24–31 (KKKISLRT) the chain is Cytoplasmic. The chain crosses the membrane as a helical span at residues 32-52 (VGAALVLQVVIGGIMLWLPPG). At 53–95 (RWVAEKVAFGVHKVMAYSDAGSAFIFGSLVGPKMDTLFDGAGF) the chain is on the periplasmic side. Residues 96–118 (IFGFRVLPAIIFVTALVSILYYI) traverse the membrane as a helical segment. The Cytoplasmic segment spans residues 119 to 172 (GVMGILIRILGGIFQKALNISKIESFVAVTTIFLGQNEIPAIVKPFIDRLNRNE). A helical membrane pass occupies residues 173–193 (LFTAICSGMASIAGSTMIGYA). Over 194–196 (ALG) the chain is Periplasmic. Residues 197-217 (VPVEYLLAASLMAIPGGILFA) form a helical membrane-spanning segment. Topologically, residues 218 to 246 (RLLSPATESSQVSFNNLSFTETPPKSIIE) are cytoplasmic. A helical transmembrane segment spans residues 247 to 267 (AAATGAMTGLKIAAGVATVVM). Topologically, residues 268–352 (AFVAIIALIN…QTAGTLDAKT (85 aa)) are periplasmic. The chain crosses the membrane as a helical span at residues 353 to 373 (VAIISFALCGFANFGSIGVVV). At 374–394 (GAFSAVAPHRAPEIAQLGLRA) the chain is on the cytoplasmic side. A helical transmembrane segment spans residues 395–415 (LAAATLSNLMSATIAGFFIGL). Ala416 is a topological domain (periplasmic).

Belongs to the concentrative nucleoside transporter (CNT) (TC 2.A.41) family.

It localises to the cell inner membrane. In Escherichia coli (strain K12), this protein is Putative nucleoside permease NupX (nupX).